Here is a 377-residue protein sequence, read N- to C-terminus: Dehydrogenase/reductase SDR family member 13 (377 aa).

Residues 1–25 (MEALLLGVGLLLGAYVLVYYNLVKA) form the signal peptide. NAD(+) contacts are provided by Ser-46 and Ile-48. Ser-170 serves as a coordination point for substrate. The NAD(+) site is built by Tyr-197, Lys-201, and Ser-232. Tyr-197 acts as the Proton acceptor in catalysis. The segment at 310-363 (LAGLGPGEDAESDEDSQPEDPGTPSSPSSPHPEEPTVSELYPSPQSSTDRSTVT) is disordered. Positions 317 to 327 (EDAESDEDSQP) are enriched in acidic residues. Positions 328–337 (EDPGTPSSPS) are enriched in low complexity. The span at 352–363 (SPQSSTDRSTVT) shows a compositional bias: polar residues.

The protein belongs to the short-chain dehydrogenases/reductases (SDR) family.

It is found in the secreted. Its function is as follows. Putative oxidoreductase. This Bos taurus (Bovine) protein is Dehydrogenase/reductase SDR family member 13 (DHRS13).